The following is a 283-amino-acid chain: uncharacterized protein (283 aa).

5 helical membrane passes run 8 to 28 (LILSIVGNILLGLIKIIIGYV), 38 to 58 (GIHSLSDVITSIIGIIGVKIA), 73 to 93 (FECLFSFFIGLALFFTAYEIG), 100 to 120 (IIYGEVIEVNAIMVGVAILSI), and 175 to 195 (AIAGIIVALMIAKVAFDICLT).

The protein belongs to the cation diffusion facilitator (CDF) transporter (TC 2.A.4) family.

It is found in the cell membrane. This is an uncharacterized protein from Methanocaldococcus jannaschii (strain ATCC 43067 / DSM 2661 / JAL-1 / JCM 10045 / NBRC 100440) (Methanococcus jannaschii).